We begin with the raw amino-acid sequence, 36 residues long: U14-ctenitoxin-Co1b (36 aa).

In terms of tissue distribution, expressed by the venom gland.

It localises to the secreted. In terms of biological role, not toxic to mice by intracerebroventricular injection. This is U14-ctenitoxin-Co1b from Ctenus ornatus (Brazilian spider).